Here is a 421-residue protein sequence, read N- to C-terminus: Inhibitor of growth protein 3 (421 aa).

Positions 129-163 are disordered; the sequence is PSQPVNNHHAHSHTPVEKRKYNPTSHHAAADHIPE. Residues Lys148, Lys165, and Lys167 each participate in a glycyl lysine isopeptide (Lys-Gly) (interchain with G-Cter in SUMO2) cross-link. Lys181 bears the N6-acetyllysine mark. Lys256 participates in a covalent cross-link: Glycyl lysine isopeptide (Lys-Gly) (interchain with G-Cter in SUMO2). N6-acetyllysine is present on Lys264. Residues 286 to 296 are compositionally biased toward polar residues; the sequence is TQNASSSATDS. The tract at residues 286–323 is disordered; it reads TQNASSSATDSRSGRKSKNNTKSSSQQSSSSSSSSSSS. Positions 308-323 are enriched in low complexity; the sequence is SSSQQSSSSSSSSSSS. A PHD-type zinc finger spans residues 363–412; it reads PRYCICNQVSYGEMVGCDNQDCPIEWFHYGCVGLTEAPKGKWFCPQCTAA. Positions 366, 368, 379, 384, 390, 393, 406, and 409 each coordinate Zn(2+).

It belongs to the ING family. As to quaternary structure, interacts with H3K4me3 and to a lesser extent with H3K4me2. Component of the NuA4 histone acetyltransferase complex which contains the catalytic subunit KAT5/TIP60 and the subunits EP400, TRRAP/PAF400, BRD8/SMAP, EPC1, DMAP1/DNMAP1, RUVBL1/TIP49, RUVBL2, ING3, actin, ACTL6A/BAF53A, MORF4L1/MRG15, MORF4L2/MRGX, MRGBP, YEATS4/GAS41, VPS72/YL1 and MEAF6. The NuA4 complex interacts with MYC. HTATTIP/TIP60, EPC1, and ING3 together constitute a minimal HAT complex termed Piccolo NuA4. Component of a SWR1-like complex.

It localises to the nucleus. In terms of biological role, component of the NuA4 histone acetyltransferase (HAT) complex which is involved in transcriptional activation of select genes principally by acetylation of nucleosomal histones H4 and H2A. This modification may both alter nucleosome - DNA interactions and promote interaction of the modified histones with other proteins which positively regulate transcription. This complex may be required for the activation of transcriptional programs associated with oncogene and proto-oncogene mediated growth induction, tumor suppressor mediated growth arrest and replicative senescence, apoptosis, and DNA repair. NuA4 may also play a direct role in DNA repair when directly recruited to sites of DNA damage. Component of a SWR1-like complex that specifically mediates the removal of histone H2A.Z/H2AZ1 from the nucleosome. The sequence is that of Inhibitor of growth protein 3 (Ing3) from Mus musculus (Mouse).